Here is a 105-residue protein sequence, read N- to C-terminus: Nitrogenase-stabilizing/protective protein NifW (105 aa).

It belongs to the NifW family. As to quaternary structure, homotrimer; associates with NifD.

Functionally, may protect the nitrogenase Fe-Mo protein from oxidative damage. The chain is Nitrogenase-stabilizing/protective protein NifW from Nostoc punctiforme (strain ATCC 29133 / PCC 73102).